Consider the following 424-residue polypeptide: Hemagglutinin-esterase (424 aa).

Positions 1–16 are cleaved as a signal peptide; it reads MFLLPRFVLVSCIIGS. The esterase domain 1 stretch occupies residues 7–127; that stretch reads FVLVSCIIGS…SNDIWMQNKG (121 aa). Residues 17-392 are Virion surface-facing; that stretch reads LGFDNPPTNV…PICVYDPLPI (376 aa). Catalysis depends on S40, which acts as the Nucleophile. C44 and C65 are oxidised to a cystine. N-linked (GlcNAc...) asparagine; by host glycans are attached at residues N54, N89, N153, N236, and N301. Disulfide bonds link C113-C162, C197-C276, and C205-C249. The segment at 128-266 is receptor binding; it reads LFYTQLYKNM…GNYLAISNEL (139 aa). Residues 267 to 379 form an esterase domain 2 region; that stretch reads LLTVPTKAIC…RCPTAADINT (113 aa). Residues C307 and C312 are joined by a disulfide bond. N-linked (GlcNAc...) asparagine; by host glycosylation occurs at N316. Catalysis depends on charge relay system residues D326 and H329. C347 and C371 are joined by a disulfide. N-linked (GlcNAc...) asparagine; by host glycosylation is present at N358. The helical transmembrane segment at 393–413 threads the bilayer; that stretch reads ILLGILLGVAVIIIVVLLLYF. The Intravirion segment spans residues 414-424; sequence MVDNGTRLHDA. An N-linked (GlcNAc...) asparagine; by host glycan is attached at N417.

This sequence belongs to the influenza type C/coronaviruses hemagglutinin-esterase family. Homodimer; disulfide-linked. Forms a complex with the M protein in the pre-Golgi. Associates then with S-M complex to form a ternary complex S-M-HE. N-glycosylated in the host RER.

Its subcellular location is the virion membrane. The protein resides in the host cell membrane. It catalyses the reaction N-acetyl-9-O-acetylneuraminate + H2O = N-acetylneuraminate + acetate + H(+). The enzyme catalyses N-acetyl-4-O-acetylneuraminate + H2O = N-acetylneuraminate + acetate + H(+). Its function is as follows. Structural protein that makes short spikes at the surface of the virus. Contains receptor binding and receptor-destroying activities. Mediates de-O-acetylation of N-acetyl-4-O-acetylneuraminic acid, which is probably the receptor determinant recognized by the virus on the surface of erythrocytes and susceptible cells. This receptor-destroying activity is important for virus release as it probably helps preventing self-aggregation and ensures the efficient spread of the progeny virus from cell to cell. May serve as a secondary viral attachment protein for initiating infection, the spike protein being the major one. May become a target for both the humoral and the cellular branches of the immune system. The protein is Hemagglutinin-esterase of Bovine coronavirus (strain LSU-94LSS-051) (BCoV-LSU).